A 478-amino-acid polypeptide reads, in one-letter code: Cytochrome c-552 (478 aa).

The first 26 residues, 1–26 (MTRIKINARRIFSLLIPFFFFTSVHA), serve as a signal peptide directing secretion. Residue His-94 coordinates heme c. The heme site is built by Cys-122, Cys-125, and Lys-126. The heme c site is built by Cys-160, Cys-163, His-164, Cys-209, Cys-212, and His-213. Ca(2+)-binding residues include Glu-215, Tyr-216, Lys-261, and Gln-263. Tyr-216 contributes to the substrate binding site. A substrate-binding site is contributed by His-264. Heme c-binding residues include His-275, Cys-282, Cys-285, His-286, His-301, Cys-314, Cys-317, His-318, and His-393.

It belongs to the cytochrome c-552 family. The cofactor is Ca(2+). Heme c is required as a cofactor.

It localises to the periplasm. It catalyses the reaction 6 Fe(III)-[cytochrome c] + NH4(+) + 2 H2O = 6 Fe(II)-[cytochrome c] + nitrite + 8 H(+). Its pathway is nitrogen metabolism; nitrate reduction (assimilation). Its function is as follows. Catalyzes the reduction of nitrite to ammonia, consuming six electrons in the process. The sequence is that of Cytochrome c-552 from Shigella flexneri.